Reading from the N-terminus, the 100-residue chain is Co-chaperonin GroES (100 aa).

The protein belongs to the GroES chaperonin family. In terms of assembly, heptamer of 7 subunits arranged in a ring. Interacts with the chaperonin GroEL.

Its subcellular location is the cytoplasm. Its function is as follows. Together with the chaperonin GroEL, plays an essential role in assisting protein folding. The GroEL-GroES system forms a nano-cage that allows encapsulation of the non-native substrate proteins and provides a physical environment optimized to promote and accelerate protein folding. GroES binds to the apical surface of the GroEL ring, thereby capping the opening of the GroEL channel. The protein is Co-chaperonin GroES of Mycolicibacterium vanbaalenii (strain DSM 7251 / JCM 13017 / BCRC 16820 / KCTC 9966 / NRRL B-24157 / PYR-1) (Mycobacterium vanbaalenii).